The sequence spans 343 residues: Transmembrane protein 120A (343 aa).

The Cytoplasmic segment spans residues M1–K135. A CoA-binding site is contributed by K130. A helical membrane pass occupies residues F136 to N156. Over S157–A162 the chain is Extracellular. The chain crosses the membrane as a helical span at residues A163–I183. Residues N184–K190 are Cytoplasmic-facing. CoA-binding residues include S187 and R188. The chain crosses the membrane as a helical span at residues G191–P211. The Extracellular portion of the chain corresponds to D212 to Q222. A helical membrane pass occupies residues F223–Y240. Q237, Y240, Q241, and H283 together coordinate CoA. The Cytoplasmic segment spans residues Q241–T273. The chain crosses the membrane as a helical span at residues F274–F294. The Extracellular segment spans residues N295–W305. Residues Q306–L326 form a helical membrane-spanning segment. The Cytoplasmic portion of the chain corresponds to R327–D343. CoA is bound at residue K332.

It belongs to the TMEM120 family. In terms of assembly, homodimer. Forms heterooligomer with TMEM120B. Interacts with PKD2; TMEM120A inhibits PKD2 channel activity through the physical association of PKD2 with TMEM120A. As to expression, widely expressed, with higher expression in the heart, kidneys, colon and sensory neurons of the dorsal root ganglia. Expressed in nociceptors. Highly expressed in white adipose tissue (at protein level). Highly expressed in brown adipose tissue and expressed at low levels in liver.

The protein localises to the cell membrane. Its subcellular location is the nucleus envelope. It is found in the nucleus inner membrane. It localises to the endoplasmic reticulum. Functionally, multifunctional protein involved in mechanosensation, and plays an essential role in lipid metabolism and adipocyte differentiation. May function as a potential ion channel involved in sensing mechanical stimuli. Mediates the mechanosensitivity of the PKD2-TMEM120A channel complex through direct physical interaction. TMEM120A seems to affect mechanosensation by inhibiting PIEZO2 channels, possibly by altering cellular lipid content. TMEM120A is structurally similar to a lipid-modifying enzyme, ELOVL7, and contains a bound coenzyme A molecule, which suggests it might function as an enzyme in lipid metabolism. This Mus musculus (Mouse) protein is Transmembrane protein 120A.